The following is a 151-amino-acid chain: Ribosome maturation factor RimP (151 aa).

It belongs to the RimP family.

The protein localises to the cytoplasm. In terms of biological role, required for maturation of 30S ribosomal subunits. The sequence is that of Ribosome maturation factor RimP from Crocosphaera subtropica (strain ATCC 51142 / BH68) (Cyanothece sp. (strain ATCC 51142)).